A 318-amino-acid chain; its full sequence is Olfactory receptor 2T34 (318 aa).

Residues 1–30 lie on the Extracellular side of the membrane; sequence MCSGNQTSQNQTASTDFTLTGLFAESKHAA. N-linked (GlcNAc...) asparagine glycosylation is found at N5 and N10. The chain crosses the membrane as a helical span at residues 31 to 54; it reads LLYTVTFLLFLMALTGNALLILLI. Residues 55-62 lie on the Cytoplasmic side of the membrane; sequence HSEPRLHT. The helical transmembrane segment at 63-84 threads the bilayer; sequence PMYFFISQLALMDLMYLCVTVP. The Extracellular portion of the chain corresponds to 85-105; it reads KMLVGQVTGDDTISPSGCGIQ. C102 and C194 form a disulfide bridge. A helical transmembrane segment spans residues 106-125; that stretch reads MFFHLTLAGAEVFLLAAMAY. At 126-144 the chain is on the cytoplasmic side; sequence DRYAAVCRPLHYPLLMNQR. Residues 145–163 form a helical membrane-spanning segment; that stretch reads VCQLLVSACWVLGMVDGLL. The Extracellular segment spans residues 164–200; it reads LTPITMSFPFCQSRKILSFFCETPALLKLSCSDVSLY. A helical membrane pass occupies residues 201–224; sequence KMLTYLCCILMLLTPIMVISSSYT. Residues 225–241 are Cytoplasmic-facing; sequence LILHLIHRMNSAAGRRK. Residues 242 to 264 traverse the membrane as a helical segment; the sequence is ALATCSSHMIIVLLLFGASFYTY. Topologically, residues 265 to 277 are extracellular; sequence MLRSSYHTAEQDM. A helical membrane pass occupies residues 278–297; the sequence is MVSAFYTIFTPVLNPLIYSL. The Cytoplasmic segment spans residues 298-318; it reads RNKDVTRALRSMMQSRMNQEK.

It belongs to the G-protein coupled receptor 1 family.

The protein resides in the cell membrane. Odorant receptor. The chain is Olfactory receptor 2T34 (OR2T34) from Homo sapiens (Human).